A 127-amino-acid chain; its full sequence is MAIWQGRSLRKPSGGRIVLARKKRKRELGREPSNTRVAEQDKRKIIRTYGGNKKVRLTAAAYANVFDKSGKGRKVRIIRVIENPANRQFARRNIITKGAIIETEIGKAKVTSRPGQDGVVNAILLEE.

This sequence belongs to the eukaryotic ribosomal protein eS8 family. In terms of assembly, part of the 30S ribosomal subunit.

This chain is Small ribosomal subunit protein eS8 (rps8e), found in Pyrococcus abyssi (strain GE5 / Orsay).